We begin with the raw amino-acid sequence, 744 residues long: Serine/threonine-protein kinase GM11705 (744 aa).

A compositionally biased stretch (polar residues) spans 17–35; the sequence is VLSSHQPSPSATHPQSVPS. Disordered regions lie at residues 17 to 38 and 54 to 78; these read VLSS…SKAN and NVQE…PEKE. Doublecortin domains follow at residues 154 to 240 and 309 to 392; these read LRIK…VEYN and RIVT…AEDF. A Protein kinase domain is found at 473-731; the sequence is YTLGRIIGDG…SEDILDHPWT (259 aa). ATP is bound by residues 479–487 and Lys-502; that span reads IGDGNFAIV. The active-site Proton acceptor is Asp-594.

It belongs to the protein kinase superfamily. CAMK Ser/Thr protein kinase family. CaMK subfamily.

The catalysed reaction is L-seryl-[protein] + ATP = O-phospho-L-seryl-[protein] + ADP + H(+). It catalyses the reaction L-threonyl-[protein] + ATP = O-phospho-L-threonyl-[protein] + ADP + H(+). The protein is Serine/threonine-protein kinase GM11705 of Drosophila sechellia (Fruit fly).